The primary structure comprises 215 residues: Pyrrolidone-carboxylate peptidase (215 aa).

Residues Glu80, Cys143, and His167 contribute to the active site.

The protein belongs to the peptidase C15 family. Homotetramer.

The protein localises to the cytoplasm. The catalysed reaction is Release of an N-terminal pyroglutamyl group from a polypeptide, the second amino acid generally not being Pro.. Functionally, removes 5-oxoproline from various penultimate amino acid residues except L-proline. The chain is Pyrrolidone-carboxylate peptidase from Bacillus mycoides (strain KBAB4) (Bacillus weihenstephanensis).